A 99-amino-acid chain; its full sequence is Small ribosomal subunit protein uS19 (99 aa).

The interval 76-99 (PTRSFRGHAGGGKAEKGGSAPRKK) is disordered.

This sequence belongs to the universal ribosomal protein uS19 family.

Functionally, protein S19 forms a complex with S13 that binds strongly to the 16S ribosomal RNA. This is Small ribosomal subunit protein uS19 from Pelodictyon phaeoclathratiforme (strain DSM 5477 / BU-1).